The chain runs to 584 residues: Putative adenine deaminase BA_3032/GBAA_3032/BAS2818 (584 aa).

This sequence belongs to the metallo-dependent hydrolases superfamily. Adenine deaminase family.

The enzyme catalyses adenine + H2O + H(+) = hypoxanthine + NH4(+). The polypeptide is Putative adenine deaminase BA_3032/GBAA_3032/BAS2818 (Bacillus anthracis).